A 372-amino-acid polypeptide reads, in one-letter code: Ubl carboxyl-terminal hydrolase 18 (372 aa).

A disordered region spans residues 19-45 (SSQSPADLEEKKEEDSNMKREQPRERP). Basic and acidic residues predominate over residues 26–45 (LEEKKEEDSNMKREQPRERP). Residues 36–51 (MKREQPRERPRAWDYP) form a mediates interaction with IFNAR2 region. The interval 51-112 (PHGLVGLHNI…MLLLLEKMQD (62 aa)) is mediates interaction with STAT2. A USP domain is found at 55–370 (VGLHNIGQTC…TAYLLVYMKM (316 aa)). The active-site Nucleophile is the Cys-64. The interval 303–312 (ELFAVIAHVG) is mediates interaction with STAT2 and necessary for the negative regulation of the type I IFN signaling pathway. Residues 313–372 (MADSGHYCVYIRNAVDGKWFCFNDSNICLVSWEDIQCTYGNPNYHWQETAYLLVYMKMEC) are mediates interaction with IFNAR2. Residue His-318 is the Proton acceptor of the active site.

Belongs to the peptidase C19 family. Interacts with STAT2; the interaction is direct. Interacts with IFNAR2; indirectly via STAT2, it negatively regulates the assembly of the ternary interferon-IFNAR1-IFNAR2 complex and inhibits type I interferon signaling. Interacts with STING1. Interacts with USP20.

Its subcellular location is the cytoplasm. The protein resides in the nucleus. It carries out the reaction Thiol-dependent hydrolysis of ester, thioester, amide, peptide and isopeptide bonds formed by the C-terminal Gly of ubiquitin (a 76-residue protein attached to proteins as an intracellular targeting signal).. Its function is as follows. Interferon-induced ISG15-specific protease that plays a crucial role for maintaining a proper balance of ISG15-conjugated proteins in cells. Regulates protein ISGylation by efficiently cleaving ISG15 conjugates linked via isopeptide bonds. Regulates T-cell activation and T-helper 17 (Th17) cell differentiation by deubiquitinating TAK1, likely to keep TAK1-TAB complexes in steady conditions. In turn, restricts activation of NF-kappa-B, NFAT, and JNK as well as expression of IL2 in T-cells after TCR activation. Acts as a molecular adapter with USP20 to promote innate antiviral response through deubiquitinating STING1. Involved also in the negative regulation of the inflammatory response triggered by type I interferon. Upon recruitment by STAT2 to the type I interferon receptor subunit IFNAR2 interferes with the assembly of the ternary interferon-IFNAR1-IFNAR2 complex and acts as a negative regulator of the type I interferon signaling pathway. Has enzymatic activity similar to isoform 1 and interferes with type I interferon signaling. Major deISGylation enzyme for nuclear proteins. The protein is Ubl carboxyl-terminal hydrolase 18 (USP18) of Homo sapiens (Human).